The primary structure comprises 202 residues: Glycerol-3-phosphate acyltransferase (202 aa).

5 helical membrane-spanning segments follow: residues 3-23, 51-71, 74-94, 116-136, and 140-160; these read ILLATVAAYLIGSVSFAVVVS, KAAILTLVGDAFKGWLAVWLV, FGIGGEIGVALAAIAVFLGHL, AVHPALGLATALTWLIIAFFF, and SLAALVAAVFAPVFDVFLFGT.

The protein belongs to the PlsY family. Probably interacts with PlsX.

The protein resides in the cell inner membrane. It carries out the reaction an acyl phosphate + sn-glycerol 3-phosphate = a 1-acyl-sn-glycero-3-phosphate + phosphate. Its pathway is lipid metabolism; phospholipid metabolism. Its function is as follows. Catalyzes the transfer of an acyl group from acyl-phosphate (acyl-PO(4)) to glycerol-3-phosphate (G3P) to form lysophosphatidic acid (LPA). This enzyme utilizes acyl-phosphate as fatty acyl donor, but not acyl-CoA or acyl-ACP. In Burkholderia thailandensis (strain ATCC 700388 / DSM 13276 / CCUG 48851 / CIP 106301 / E264), this protein is Glycerol-3-phosphate acyltransferase.